A 210-amino-acid chain; its full sequence is MSAAKPKTAKKARAAPAHPPTSQMVVAAITALKERGGSSNQAIKKYIAANYKVDINKQATFIKRALKAGVANGTLVQVKGKGASGSFKLGKVKAGKTEAQKARAAAKKAKLAAKKKEQKEKKAAKTKARKEKLAAKKAAKKAAKKVKKPAAKAKKPAKKAAKKPAAKKAAKKPAAKKPAKKAAKKPAAKKAAKPAKKAAKKPAAKKAAKK.

Disordered regions lie at residues 1–21 and 86–210; these read MSAA…HPPT and SFKL…AAKK. An H15 domain is found at 17-91; it reads AHPPTSQMVV…GASGSFKLGK (75 aa). The segment covering 104–113 has biased composition (basic residues); that stretch reads AAAKKAKLAA. Basic and acidic residues predominate over residues 114-123; the sequence is KKKEQKEKKA. Residues 124 to 210 are compositionally biased toward basic residues; it reads AKTKARKEKL…KPAAKKAAKK (87 aa).

The protein belongs to the histone H1/H5 family.

The protein localises to the nucleus. Its subcellular location is the chromosome. Its function is as follows. Histones H1 are necessary for the condensation of nucleosome chains into higher-order structures. The sequence is that of Late histone H1 from Lytechinus pictus (Painted sea urchin).